A 342-amino-acid chain; its full sequence is Anthranilate phosphoribosyltransferase (342 aa).

5-phospho-alpha-D-ribose 1-diphosphate-binding positions include G90, 93-94, T98, 100-103, 118-126, and A130; these read GD, NIST, and KHGNRSVSS. G90 contributes to the anthranilate binding site. S102 is a Mg(2+) binding site. Residue N121 coordinates anthranilate. R176 serves as a coordination point for anthranilate. The Mg(2+) site is built by D234 and E235.

The protein belongs to the anthranilate phosphoribosyltransferase family. As to quaternary structure, homodimer. Mg(2+) is required as a cofactor.

It carries out the reaction N-(5-phospho-beta-D-ribosyl)anthranilate + diphosphate = 5-phospho-alpha-D-ribose 1-diphosphate + anthranilate. It functions in the pathway amino-acid biosynthesis; L-tryptophan biosynthesis; L-tryptophan from chorismate: step 2/5. Catalyzes the transfer of the phosphoribosyl group of 5-phosphorylribose-1-pyrophosphate (PRPP) to anthranilate to yield N-(5'-phosphoribosyl)-anthranilate (PRA). This Mannheimia succiniciproducens (strain KCTC 0769BP / MBEL55E) protein is Anthranilate phosphoribosyltransferase.